A 408-amino-acid polypeptide reads, in one-letter code: 2-acyl-4-prenylphloroglucinol 6-prenyltransferase, chloroplastic (408 aa).

Residues 1–46 constitute a chloroplast transit peptide; that stretch reads MELSSACNLSLKPNYYYYPTSLFPSNNSYNNLKASSYYQTQRPIKC. 9 consecutive transmembrane segments (helical) span residues 119–139, 146–166, 193–213, 217–237, 257–277, 281–301, 326–346, 355–375, and 388–408; these read PIPF…ELLK, WQLM…HIYI, SVKS…LLMI, CGLF…MYSV, IGIG…GLPF, PPFT…SILK, IVLV…GVAI, YIMI…TWLL, and YYHF…FIST.

Belongs to the UbiA prenyltransferase family. In terms of assembly, homo- and heteromer. Interacts with PT1L, forming a functional metabolon. It depends on Mg(2+) as a cofactor. As to expression, expressed in trichomes.

Its subcellular location is the plastid. The protein localises to the chloroplast membrane. The catalysed reaction is a 2-acyl-4-prenylphloroglucinol + dimethylallyl diphosphate = a 2-acyl-4,6-diprenylphloroglucinol + diphosphate. It carries out the reaction a 2-acyl-4,6-diprenylphloroglucinol + dimethylallyl diphosphate = a 2-acyl-4,6,6-triprenylphloroglucinol + diphosphate. Its pathway is secondary metabolite biosynthesis. Its function is as follows. Involved in the biosynthesis of prenylated phenolics natural products which contribute to the bitter taste of beer and display broad biological activities. Catalyzes the two last prenylation steps in the beta-bitter acid pathway. Uses dimethylallyl diphosphate (DMAPP) as the prenyl donor. This is 2-acyl-4-prenylphloroglucinol 6-prenyltransferase, chloroplastic from Humulus lupulus (European hop).